A 131-amino-acid polypeptide reads, in one-letter code: Inactive protein FON2 SPARE1 (131 aa).

The tract at residues 67–131 is disordered; that stretch reads SPSSLTTTDR…VPTGPNPLHH (65 aa). Positions 76 to 97 are enriched in basic residues; that stretch reads RHHHHHRHHGHHHHRGHDRWNR.

It belongs to the CLV3/ESR signal peptide family. In terms of tissue distribution, expressed in all aerial apical meristems, including the floral and inflorescence meristems in the reproductive phase and the shoot apical meristem in the vegetative phase. Also detected in the primordia of lateral organs such as the leaf and the floral organs.

Non functional suppressor of the fon2 mutation. In Oryza sativa subsp. japonica, the protein has a single amino acid substitution at the putative processing site of the signal peptide while in all the other varieties/species of domesticated and wild rice tested the protein is functional. The protein is Inactive protein FON2 SPARE1 (FOS1) of Oryza sativa subsp. japonica (Rice).